The primary structure comprises 202 residues: Glycolipid transfer protein 1 (202 aa).

D52, N56, W99, and H138 together coordinate a ganglioside GM3 (d18:1(4E)).

The protein belongs to the GLTP family.

Its function is as follows. May be involved in glycolipids transfer. In Arabidopsis thaliana (Mouse-ear cress), this protein is Glycolipid transfer protein 1.